The sequence spans 216 residues: Ceramide-1-phosphate transfer protein (216 aa).

Residues aspartate 56, lysine 60, arginine 108, arginine 112, and histidine 152 each contribute to the an N-acylsphingoid base 1-phosphate site.

This sequence belongs to the GLTP family.

The protein localises to the cytoplasm. It localises to the cytosol. Its subcellular location is the golgi apparatus. The protein resides in the trans-Golgi network membrane. It is found in the cell membrane. The protein localises to the endosome membrane. It localises to the nucleus outer membrane. It catalyses the reaction N-(hexadecanoyl)-sphing-4-enine-1-phosphate(in) = N-(hexadecanoyl)-sphing-4-enine-1-phosphate(out). It carries out the reaction N-(9Z-octadecenoyl)-sphing-4-enine-1-phosphate(in) = N-(9Z-octadecenoyl)-sphing-4-enine-1-phosphate(out). Its function is as follows. Mediates the intracellular transfer of ceramide-1-phosphate (C1P) between organelle membranes and the cell membrane. Required for normal structure of the Golgi stacks. Can bind phosphoceramides with a variety of aliphatic chains, but has a preference for lipids with saturated C16:0 or monounsaturated C18:1 aliphatic chains, and is inefficient with phosphoceramides containing lignoceryl (C24:0). Plays a role in the regulation of the cellular levels of ceramide-1-phosphate, and thereby contributes to the regulation of phospholipase PLA2G4A activity and the release of arachidonic acid. Has no activity with galactosylceramide, lactosylceramide, sphingomyelin, phosphatidylcholine, phosphatidic acid and ceramide. C1P transfer is stimulated by phosphatidylserine in C1P source vesicles. Regulates autophagy, inflammasome mediated IL1B and IL18 processing, and pyroptosis, but not apoptosis. This Mus musculus (Mouse) protein is Ceramide-1-phosphate transfer protein.